Consider the following 152-residue polypeptide: UPF0266 membrane protein KPN78578_23010 (152 aa).

Helical transmembrane passes span 6-26 (LVIILFILALLAYAIYDQFIM), 45-65 (VDGMIFVGLTAILIYNNITQH), and 67-87 (TAITTWLLSVLALMGLYLFWI).

This sequence belongs to the UPF0266 family.

It localises to the cell inner membrane. This Klebsiella pneumoniae subsp. pneumoniae (strain ATCC 700721 / MGH 78578) protein is UPF0266 membrane protein KPN78578_23010.